Here is a 389-residue protein sequence, read N- to C-terminus: MAEPDPSDPLETQAGKVQEAQDSDSDTEGGATGGEAEMDFLRNLFTQTLGLGSQKERLLDELTLEGVTRYMQSERCRKVICLVGAGISTSAGIPDFRSPSTGLYANLEKYHLPYPEAIFEISYFKKHPEPFFALAKELYPGQFKPTICHYFIRLLKEKGLLLRCYTQNIDTLERVAGLEPQDLVEAHGTFYTSHCVNTSCRKEYTMGWMKEKIFSEATPRCEQCQSVVKPDIVFFGENLPSRFFSCMQSDFSKVDLLIIMGTSLQVQPFASLISKAPLATPRLLINKEKTGQTDPFLGMMMGLGGGMDFDSKKAYRDVAWLGDCDQGCLALADLLGWKKELEDLVRREHANIDAQSGSQAPNPSTTISPGKSPPPAKEAARTKEKEEQQ.

Positions 1–34 are disordered; it reads MAEPDPSDPLETQAGKVQEAQDSDSDTEGGATGG. An N-acetylalanine modification is found at Ala2. Ser23 and Ser25 each carry phosphoserine. Phosphothreonine is present on Thr27. The short motif at 41-51 is the Nuclear export signal element; sequence LRNLFTQTLGL. Ser53 is subject to Phosphoserine. The region spanning 57-338 is the Deacetylase sirtuin-type domain; that stretch reads RLLDELTLEG…LALADLLGWK (282 aa). Residues 85 to 89 and 95 to 97 contribute to the NAD(+) site; these read AGIST and DFR. The residue at position 100 (Ser100) is a Phosphoserine. 167-170 is an NAD(+) binding site; sequence QNID. His187 functions as the Proton acceptor in the catalytic mechanism. Residues Cys195, Cys200, Cys221, and Cys224 each coordinate Zn(2+). NAD(+) contacts are provided by residues 262–263, 286–288, and Cys324; these read TS and NKE. Positions 350–389 are disordered; that stretch reads ANIDAQSGSQAPNPSTTISPGKSPPPAKEAARTKEKEEQQ. Residues 353 to 369 are compositionally biased toward polar residues; that stretch reads DAQSGSQAPNPSTTISP. Phosphoserine is present on residues Ser368 and Ser372. A compositionally biased stretch (basic and acidic residues) spans 378–389; the sequence is EAARTKEKEEQQ.

The protein belongs to the sirtuin family. Class I subfamily. In terms of assembly, interacts with CDC20, FOXO3 and FZR1. Associates with microtubule in primary cortical mature neurons. Homotrimer. Interacts (via both phosphorylated, unphosphorylated, active or inactive forms) with HDAC6; the interaction is necessary for the complex to interact with alpha-tubulin, suggesting that these proteins belong to a large complex that deacetylates the cytoskeleton. Interacts with FOXO1; the interaction is disrupted upon serum-starvation or oxidative stress, leading to increased level of acetylated FOXO1 and induction of autophagy. Interacts with RELA; the interaction occurs in the cytoplasm and is increased in a TNF-alpha-dependent manner. Interacts with HOXA10; the interaction is direct. Interacts with YWHAB and YWHAG; the interactions occur in a AKT-dependent manner and increase SIRT2-dependent TP53 deacetylation. Interacts with MAPK1/ERK2 and MAPK3/ERK1; the interactions increase SIRT2 stability and deacetylation activity. Interacts (phosphorylated form) with KMT5A isoform 2; the interaction is direct, stimulates KMT5A-mediated methyltransferase activity on histone at 'Lys-20' (H4K20me1) and is increased in a H(2)O(2)-induced oxidative stress-dependent manner. Interacts with G6PD; the interaction is enhanced by H(2)O(2) treatment. Interacts with a G1/S-specific cyclin E-CDK2 complex. Interacts with AURKA, CDK5R1 (p35 form) and CDK5 and HIF1A. Interacts with the tRNA ligase SARS1; recruited to the VEGFA promoter via interaction with SARS1. Isoform 2 and isoform 4 associate with microtubules in primary cortical mature neurons. Interacts with BEX4; negatively regulates alpha-tubulin deacetylation by SIRT2. The cofactor is Zn(2+). Post-translationally, phosphorylated at phosphoserine and phosphothreonine. Phosphorylated at Ser-368 by a mitotic kinase CDK1/cyclin B at the G2/M transition; phosphorylation regulates the delay in cell-cycle progression. Phosphorylated at Ser-368 by a mitotic kinase G1/S-specific cyclin E/Cdk2 complex; phosphorylation inactivates SIRT2-mediated alpha-tubulin deacetylation and thereby negatively regulates cell adhesion, cell migration and neurite outgrowth during neuronal differentiation. Phosphorylated by cyclin A/Cdk2 and p35-Cdk5 complexes and to a lesser extent by the cyclin D3/Cdk4 and cyclin B/Cdk1, in vitro. Dephosphorylated at Ser-368 by CDC14A and CDC14B around early anaphase. In terms of processing, acetylated by EP300; acetylation leads both to the decreased of SIRT2-mediated alpha-tubulin deacetylase activity and SIRT2-mediated down-regulation of TP53 transcriptional activity. Ubiquitinated. Isoform 1 is weakly expressed in the cortex at postnatal(P) days P1, P3 and P7, and increases progressively between P17 and older adult cortex. Isoform 1 is also expressed in heart, liver and skeletal muscle, weakly expressed in the striatum and spinal cord. Isoform 2 is not expressed in the cortex at P1, P3 and P7, and increases strongly and progressively between P17 and older adult cortex. Isoform 2 is also expressed in the heart, liver, striatum and spinal cord. Isoform 4 is weakly expressed in older adult cortex and spinal cords. Expressed in the cortex. Expressed in postnatal sciatic nerves during myelination and during remyelination after nerve injury. Expressed in neurons, oligodendrocytes, Schwann cells, Purkinje cells and in astrocytes of white matter. Strongly expressed in preadipocytes compared with differentiated adipocytes. Expressed in cerebellar granule cells. Expressed in the inner ear: in the cochlea, expressed in types I and V fibrocytes in the spiral ligament (SL) and slightly in stria vascularis (SV); in the organ of Corti, expressed in some supporting cells; in the crista ampullaris, expressed in spiral ganglion cells; also expressed in the endolymphatic sac (ES) epithelial cells (at protein level). Expressed in the brain, spinal cord, optic nerve and hippocampus. Strongly expressed in 6-8 week-old ovulated meiosis II oocytes and weakly expressed in 45-58 week-old ovulated meiosis II oocytes. Expressed in the cochlea, vestibule and acoustic nerve of the inner ear.

It is found in the nucleus. The protein resides in the cytoplasm. The protein localises to the perinuclear region. It localises to the perikaryon. Its subcellular location is the cytoskeleton. It is found in the cell projection. The protein resides in the growth cone. The protein localises to the myelin membrane. It localises to the microtubule organizing center. Its subcellular location is the centrosome. It is found in the spindle. The protein resides in the chromosome. The protein localises to the midbody. It localises to the centriole. It carries out the reaction N(6)-acetyl-L-lysyl-[protein] + NAD(+) + H2O = 2''-O-acetyl-ADP-D-ribose + nicotinamide + L-lysyl-[protein]. The catalysed reaction is N(6)-tetradecanoyl-L-lysyl-[protein] + NAD(+) + H2O = 2''-O-tetradecanoyl-ADP-D-ribose + nicotinamide + L-lysyl-[protein]. It catalyses the reaction N(6)-hexadecanoyl-L-lysyl-[protein] + NAD(+) + H2O = 2''-O-hexadecanoyl-ADP-D-ribose + nicotinamide + L-lysyl-[protein]. Its activity is regulated as follows. Inhibited by Sirtinol, A3 and M15 small molecules. Inhibited by nicotinamide. Inhibited by a macrocyclic peptide inhibitor S2iL5. Inhibited by EP300-induced acetylation. In terms of biological role, NAD-dependent protein deacetylase, which deacetylates internal lysines on histone and alpha-tubulin as well as many other proteins such as key transcription factors. Participates in the modulation of multiple and diverse biological processes such as cell cycle control, genomic integrity, microtubule dynamics, cell differentiation, metabolic networks, and autophagy. Plays a major role in the control of cell cycle progression and genomic stability. Functions in the antephase checkpoint preventing precocious mitotic entry in response to microtubule stress agents, and hence allowing proper inheritance of chromosomes. Positively regulates the anaphase promoting complex/cyclosome (APC/C) ubiquitin ligase complex activity by deacetylating CDC20 and FZR1, then allowing progression through mitosis. Associates both with chromatin at transcriptional start sites (TSSs) and enhancers of active genes. Plays a role in cell cycle and chromatin compaction through epigenetic modulation of the regulation of histone H4 'Lys-20' methylation (H4K20me1) during early mitosis. Specifically deacetylates histone H4 at 'Lys-16' (H4K16ac) between the G2/M transition and metaphase enabling H4K20me1 deposition by KMT5A leading to ulterior levels of H4K20me2 and H4K20me3 deposition throughout cell cycle, and mitotic S-phase progression. Deacetylates KMT5A modulating KMT5A chromatin localization during the mitotic stress response. Also deacetylates histone H3 at 'Lys-57' (H3K56ac) during the mitotic G2/M transition. During oocyte meiosis progression, may deacetylate histone H4 at 'Lys-16' (H4K16ac) and alpha-tubulin, regulating spindle assembly and chromosome alignment by influencing microtubule dynamics and kinetochore function. Deacetylates histone H4 at 'Lys-16' (H4K16ac) at the VEGFA promoter and thereby contributes to regulate expression of VEGFA, a key regulator of angiogenesis. Deacetylates alpha-tubulin at 'Lys-40' and hence controls neuronal motility, oligodendroglial cell arbor projection processes and proliferation of non-neuronal cells. Phosphorylation at Ser-368 by a G1/S-specific cyclin E-CDK2 complex inactivates SIRT2-mediated alpha-tubulin deacetylation, negatively regulating cell adhesion, cell migration and neurite outgrowth during neuronal differentiation. Deacetylates PARD3 and participates in the regulation of Schwann cell peripheral myelination formation during early postnatal development and during postinjury remyelination. Involved in several cellular metabolic pathways. Plays a role in the regulation of blood glucose homeostasis by deacetylating and stabilizing phosphoenolpyruvate carboxykinase PCK1 activity in response to low nutrient availability. Acts as a key regulator in the pentose phosphate pathway (PPP) by deacetylating and activating the glucose-6-phosphate G6PD enzyme, and therefore, stimulates the production of cytosolic NADPH to counteract oxidative damage. Maintains energy homeostasis in response to nutrient deprivation as well as energy expenditure by inhibiting adipogenesis and promoting lipolysis. Attenuates adipocyte differentiation by deacetylating and promoting FOXO1 interaction to PPARG and subsequent repression of PPARG-dependent transcriptional activity. Plays a role in the regulation of lysosome-mediated degradation of protein aggregates by autophagy in neuronal cells. Deacetylates FOXO1 in response to oxidative stress or serum deprivation, thereby negatively regulating FOXO1-mediated autophagy. Deacetylates a broad range of transcription factors and co-regulators regulating target gene expression. Deacetylates transcriptional factor FOXO3 stimulating the ubiquitin ligase SCF(SKP2)-mediated FOXO3 ubiquitination and degradation. Deacetylates HIF1A and therefore promotes HIF1A degradation and inhibition of HIF1A transcriptional activity in tumor cells in response to hypoxia. Deacetylates RELA in the cytoplasm inhibiting NF-kappaB-dependent transcription activation upon TNF-alpha stimulation. Inhibits transcriptional activation by deacetylating p53/TP53 and EP300. Also deacetylates EIF5A. Functions as a negative regulator on oxidative stress-tolerance in response to anoxia-reoxygenation conditions. Plays a role as tumor suppressor. In addition to protein deacetylase activity, also has activity toward long-chain fatty acyl groups and mediates protein-lysine demyristoylation and depalmitoylation of target proteins, such as ARF6 and KRAS, thereby regulating their association with membranes. Functionally, deacetylates alpha-tubulin. This is NAD-dependent protein deacetylase sirtuin-2 (Sirt2) from Mus musculus (Mouse).